The primary structure comprises 137 residues: Large ribosomal subunit protein uL16 (137 aa).

This sequence belongs to the universal ribosomal protein uL16 family. As to quaternary structure, part of the 50S ribosomal subunit.

Binds 23S rRNA and is also seen to make contacts with the A and possibly P site tRNAs. This chain is Large ribosomal subunit protein uL16, found in Allorhizobium ampelinum (strain ATCC BAA-846 / DSM 112012 / S4) (Agrobacterium vitis (strain S4)).